A 78-amino-acid polypeptide reads, in one-letter code: Exodeoxyribonuclease 7 small subunit (78 aa).

Belongs to the XseB family. As to quaternary structure, heterooligomer composed of large and small subunits.

Its subcellular location is the cytoplasm. It catalyses the reaction Exonucleolytic cleavage in either 5'- to 3'- or 3'- to 5'-direction to yield nucleoside 5'-phosphates.. Bidirectionally degrades single-stranded DNA into large acid-insoluble oligonucleotides, which are then degraded further into small acid-soluble oligonucleotides. This is Exodeoxyribonuclease 7 small subunit from Mycobacterium leprae (strain TN).